The chain runs to 206 residues: GTP-binding protein YPTC5 (206 aa).

Residue Gly-15–Thr-22 participates in GTP binding. The short motif at Tyr-37–Phe-45 is the Effector region element. Residues Asp-63 to Gln-67 and Asn-125 to Asp-128 each bind GTP. S-geranylgeranyl cysteine attachment occurs at residues Cys-205 and Cys-206.

Belongs to the small GTPase superfamily. Rab family.

Its subcellular location is the cell membrane. Protein transport. Probably involved in vesicular traffic. The protein is GTP-binding protein YPTC5 (YPTC5) of Chlamydomonas reinhardtii (Chlamydomonas smithii).